Consider the following 329-residue polypeptide: 4-hydroxythreonine-4-phosphate dehydrogenase (329 aa).

Residues His-136 and Thr-137 each coordinate substrate. His-166, His-211, and His-266 together coordinate a divalent metal cation. Positions 274, 283, and 292 each coordinate substrate.

The protein belongs to the PdxA family. As to quaternary structure, homodimer. Zn(2+) is required as a cofactor. Requires Mg(2+) as cofactor. The cofactor is Co(2+).

It localises to the cytoplasm. It carries out the reaction 4-(phosphooxy)-L-threonine + NAD(+) = 3-amino-2-oxopropyl phosphate + CO2 + NADH. It functions in the pathway cofactor biosynthesis; pyridoxine 5'-phosphate biosynthesis; pyridoxine 5'-phosphate from D-erythrose 4-phosphate: step 4/5. Functionally, catalyzes the NAD(P)-dependent oxidation of 4-(phosphooxy)-L-threonine (HTP) into 2-amino-3-oxo-4-(phosphooxy)butyric acid which spontaneously decarboxylates to form 3-amino-2-oxopropyl phosphate (AHAP). This is 4-hydroxythreonine-4-phosphate dehydrogenase from Escherichia coli (strain 55989 / EAEC).